We begin with the raw amino-acid sequence, 99 residues long: Aspartyl/glutamyl-tRNA(Asn/Gln) amidotransferase subunit C (99 aa).

It belongs to the GatC family. As to quaternary structure, heterotrimer of A, B and C subunits.

The enzyme catalyses L-glutamyl-tRNA(Gln) + L-glutamine + ATP + H2O = L-glutaminyl-tRNA(Gln) + L-glutamate + ADP + phosphate + H(+). It catalyses the reaction L-aspartyl-tRNA(Asn) + L-glutamine + ATP + H2O = L-asparaginyl-tRNA(Asn) + L-glutamate + ADP + phosphate + 2 H(+). Allows the formation of correctly charged Asn-tRNA(Asn) or Gln-tRNA(Gln) through the transamidation of misacylated Asp-tRNA(Asn) or Glu-tRNA(Gln) in organisms which lack either or both of asparaginyl-tRNA or glutaminyl-tRNA synthetases. The reaction takes place in the presence of glutamine and ATP through an activated phospho-Asp-tRNA(Asn) or phospho-Glu-tRNA(Gln). This is Aspartyl/glutamyl-tRNA(Asn/Gln) amidotransferase subunit C from Sulfurihydrogenibium sp. (strain YO3AOP1).